Consider the following 1093-residue polypeptide: Leucine-rich repeats and immunoglobulin-like domains protein 1 (1093 aa).

The N-terminal stretch at 1-34 is a signal peptide; that stretch reads MARPVRGGLGAPRRSPCLLLLWLLLLRLEPVTAA. In terms of domain architecture, LRRNT spans 35–68; it reads AGPRAPCAAACTCAGDSLDCGGRGLAALPGDLPS. The Extracellular portion of the chain corresponds to 35–794; that stretch reads AGPRAPCAAA…GCRKDGTTVG (760 aa). A disulfide bridge links Cys45 with Cys54. LRR repeat units lie at residues 69–90, 93–114, 116–137, 140–161, 164–185, 189–210, 212–233, 236–257, 260–281, 284–305, 308–329, 332–353, 356–378, 383–404, and 407–428; these read WTRS…GFED, NLQE…GAAS, HVVS…QLKA, SLEV…CFPH, PIKE…AFDG, SLLT…AFKL, RLTQ…TFQG, SLEV…AFWG, KMHV…SLYG, ALHQ…GWSF, KLHE…SLAE, SLSV…AFKG, SLRV…SGAF, SLSK…AFSG, and GLEH…AFVK. A glycan (N-linked (GlcNAc...) asparagine) is linked at Asn74. Residue Asn150 is glycosylated (N-linked (GlcNAc...) asparagine). The N-linked (GlcNAc...) asparagine glycan is linked to Asn246. N-linked (GlcNAc...) asparagine glycans are attached at residues Asn292 and Asn318. Residues 440 to 491 form the LRRCT domain; it reads DSFLCDCQLKWLPPWLIGRMLQAFVTATCAHPESLKGQSIFSVPPESFVCDD. Cystine bridges form between Cys444–Cys468, Cys446–Cys489, Cys516–Cys577, and Cys620–Cys672. Ig-like C2-type domains follow at residues 495–594, 599–688, and 693–779; these read PQII…ARLT, PSFT…ATLT, and PSLV…SQLS. An N-linked (GlcNAc...) asparagine glycan is attached at Asn684. The cysteines at positions 714 and 763 are disulfide-linked. The chain crosses the membrane as a helical span at residues 795 to 815; it reads IFTIAVVSSIVLTSLVWVCII. The Cytoplasmic segment spans residues 816-1093; that stretch reads YQTRKKSEEY…RVPLLLAPKS (278 aa). Disordered regions lie at residues 946–983 and 1063–1093; these read AFHP…CSRT and PKAC…APKS.

In terms of assembly, interacts (via extracellular LRR and Ig-like domains) with EGFR/ERBB1, ERBB2, ERBB3 and ERBB4 (via extracellular domain). The physiological relevance of the interaction is controversial; LRIG1 may have low affinity for EGFR, and interaction may occur only when high levels of both proteins are present. In terms of tissue distribution, widely expressed.

The protein resides in the cell membrane. Acts as a feedback negative regulator of signaling by receptor tyrosine kinases, through a mechanism that involves enhancement of receptor ubiquitination and accelerated intracellular degradation. This is Leucine-rich repeats and immunoglobulin-like domains protein 1 from Homo sapiens (Human).